Reading from the N-terminus, the 106-residue chain is uncharacterized protein (106 aa).

Residues 24-35 (ANSISSTSFYHK) are compositionally biased toward polar residues. Disordered stretches follow at residues 24 to 49 (ANSISSTSFYHKSSNNNSHANASCEE) and 65 to 87 (LTAESSNHHSLSASNQPASSSDE). 2 stretches are compositionally biased toward low complexity: residues 36-46 (SSNNNSHANAS) and 74-85 (SLSASNQPASSS).

This is an uncharacterized protein from Arabidopsis thaliana (Mouse-ear cress).